Consider the following 319-residue polypeptide: 4-hydroxy-3-methylbut-2-enyl diphosphate reductase (319 aa).

Cysteine 17 serves as a coordination point for [4Fe-4S] cluster. 2 residues coordinate (2E)-4-hydroxy-3-methylbut-2-enyl diphosphate: histidine 46 and histidine 79. Residues histidine 46 and histidine 79 each contribute to the dimethylallyl diphosphate site. Isopentenyl diphosphate contacts are provided by histidine 46 and histidine 79. Cysteine 101 serves as a coordination point for [4Fe-4S] cluster. A (2E)-4-hydroxy-3-methylbut-2-enyl diphosphate-binding site is contributed by histidine 129. Histidine 129 is a binding site for dimethylallyl diphosphate. Histidine 129 contributes to the isopentenyl diphosphate binding site. Catalysis depends on glutamate 131, which acts as the Proton donor. Threonine 170 contacts (2E)-4-hydroxy-3-methylbut-2-enyl diphosphate. [4Fe-4S] cluster is bound at residue cysteine 200. Positions 228, 229, 230, and 273 each coordinate (2E)-4-hydroxy-3-methylbut-2-enyl diphosphate. Dimethylallyl diphosphate contacts are provided by serine 228, serine 229, asparagine 230, and serine 273. Residues serine 228, serine 229, asparagine 230, and serine 273 each contribute to the isopentenyl diphosphate site.

The protein belongs to the IspH family. [4Fe-4S] cluster serves as cofactor.

It catalyses the reaction isopentenyl diphosphate + 2 oxidized [2Fe-2S]-[ferredoxin] + H2O = (2E)-4-hydroxy-3-methylbut-2-enyl diphosphate + 2 reduced [2Fe-2S]-[ferredoxin] + 2 H(+). The catalysed reaction is dimethylallyl diphosphate + 2 oxidized [2Fe-2S]-[ferredoxin] + H2O = (2E)-4-hydroxy-3-methylbut-2-enyl diphosphate + 2 reduced [2Fe-2S]-[ferredoxin] + 2 H(+). The protein operates within isoprenoid biosynthesis; dimethylallyl diphosphate biosynthesis; dimethylallyl diphosphate from (2E)-4-hydroxy-3-methylbutenyl diphosphate: step 1/1. Its pathway is isoprenoid biosynthesis; isopentenyl diphosphate biosynthesis via DXP pathway; isopentenyl diphosphate from 1-deoxy-D-xylulose 5-phosphate: step 6/6. In terms of biological role, catalyzes the conversion of 1-hydroxy-2-methyl-2-(E)-butenyl 4-diphosphate (HMBPP) into a mixture of isopentenyl diphosphate (IPP) and dimethylallyl diphosphate (DMAPP). Acts in the terminal step of the DOXP/MEP pathway for isoprenoid precursor biosynthesis. This chain is 4-hydroxy-3-methylbut-2-enyl diphosphate reductase, found in Cereibacter sphaeroides (strain ATCC 17023 / DSM 158 / JCM 6121 / CCUG 31486 / LMG 2827 / NBRC 12203 / NCIMB 8253 / ATH 2.4.1.) (Rhodobacter sphaeroides).